The primary structure comprises 416 residues: Keratin, type I cuticular Ha1 (416 aa).

A head region spans residues 1 to 56 (MPYNFCLPSLSCRTSCSSRPCVPPSCHSCTLPGACNIPANVSNCNWFCEGSFNGSE). In terms of domain architecture, IF rod spans 56–367 (EKETMQFLND…SLLESEDCNL (312 aa)). Residues 57-91 (KETMQFLNDRLASYLEKVRQLERDNAELENLIRER) form a coil 1A region. The segment at 92 to 102 (SQQQEPLLCPS) is linker 1. The coil 1B stretch occupies residues 103–203 (YQSYFKTIEE…HEQEVNTLRC (101 aa)). The interval 204-219 (QLGDRLNVEVDAAPTV) is linker 12. A coil 2 region spans residues 220-363 (DLNRVLNETR…NTYRSLLESE (144 aa)). Positions 364–416 (DCNLPSNPCATTNACSKPIGPCLSNPCTPCVPPAPCTPCAPRPRCGPCNSFVR) are tail.

It belongs to the intermediate filament family.

The sequence is that of Keratin, type I cuticular Ha1 (KRT31) from Pan troglodytes (Chimpanzee).